Consider the following 66-residue polypeptide: Large ribosomal subunit protein bL31 (66 aa).

4 residues coordinate Zn(2+): Cys-16, Cys-18, Cys-36, and Cys-39.

The protein belongs to the bacterial ribosomal protein bL31 family. Type A subfamily. As to quaternary structure, part of the 50S ribosomal subunit. It depends on Zn(2+) as a cofactor.

Functionally, binds the 23S rRNA. This Clostridioides difficile (strain 630) (Peptoclostridium difficile) protein is Large ribosomal subunit protein bL31.